Consider the following 299-residue polypeptide: Taste receptor type 2 member 50 (299 aa).

A topological domain (extracellular) is located at residue Met-1. The helical transmembrane segment at 2–22 (ITFLYIFFSILIMVLFVLGNF) threads the bilayer. Residues 23–55 (ANGFIALVNFIDWVKRKKISSADQILTALAVSR) are Cytoplasmic-facing. A helical transmembrane segment spans residues 56–76 (IGLLWALLLNWYLTVLNPAFY). The Extracellular segment spans residues 77-87 (SVELRITSYNA). The helical transmembrane segment at 88-108 (WVVTNHFSMWLAANLSIFYLL) threads the bilayer. The Cytoplasmic segment spans residues 109–126 (KIANFSNLLFLHLKRRVR). Residues 127–147 (SVILVILLGTLIFLVCHLLVA) traverse the membrane as a helical segment. At 148-181 (NMDESMWAEEYEGNMTGKMKLRNTVHLSYLTVTT) the chain is on the extracellular side. N-linked (GlcNAc...) asparagine glycosylation occurs at Asn-161. Residues 182-202 (LWSFIPFTLSLISFLMLICSL) traverse the membrane as a helical segment. Residues 203–229 (CKHLKKMQLHGEGSQDLSTKVHIKALQ) are Cytoplasmic-facing. Residues 230–250 (TLISFLLLCAIFFLFLIVSVW) traverse the membrane as a helical segment. Residues 251–259 (SPRRLRNDP) are Extracellular-facing. The helical transmembrane segment at 260–280 (VVMVSKAVGNIYLAFDSFILI) threads the bilayer. Residues 281-299 (WRTKKLKHTFLLILCQIRC) lie on the Cytoplasmic side of the membrane.

Belongs to the G-protein coupled receptor T2R family. Expressed in subsets of taste receptor cells of the tongue and exclusively in gustducin-positive cells.

The protein localises to the membrane. Receptor that may play a role in the perception of bitterness and is gustducin-linked. May play a role in sensing the chemical composition of the gastrointestinal content. The activity of this receptor may stimulate alpha gustducin, mediate PLC-beta-2 activation and lead to the gating of TRPM5. The sequence is that of Taste receptor type 2 member 50 (TAS2R50) from Homo sapiens (Human).